A 360-amino-acid chain; its full sequence is Fructose import permease protein FrcC (360 aa).

Transmembrane regions (helical) follow at residues 48–68 (AAVP…ILGG), 84–106 (AIVG…DLSV), 125–145 (GFPP…CGYI), 155–175 (LPPF…NFLY), 205–225 (AVFT…WYVL), 254–274 (MLIS…WALI), 284–304 (AGQF…ISLF), 310–330 (IMGM…LRLM), and 335–355 (QWTY…DQWI).

This sequence belongs to the binding-protein-dependent transport system permease family. As to quaternary structure, the complex is composed of two ATP-binding proteins (FrcA), two transmembrane proteins (FrcC) and a solute-binding protein (FrcB).

It localises to the cell inner membrane. In terms of biological role, part of the high-affinity ABC transporter complex FrcBCA involved in fructose uptake. Is also a high-affinity transporter for ribose and mannose. Responsible for the translocation of the substrate across the membrane. The chain is Fructose import permease protein FrcC from Rhizobium meliloti (Ensifer meliloti).